Consider the following 225-residue polypeptide: Ribonuclease 3 (225 aa).

The RNase III domain maps to 4–127 (IEKLEQSLTY…IIGAIHLEAG (124 aa)). A Mg(2+)-binding site is contributed by Glu40. Residue Asp44 is part of the active site. Mg(2+) contacts are provided by Asp113 and Glu116. The active site involves Glu116. Residues 154-223 (DYKTKLQEIT…AKIALEKLGS (70 aa)) form the DRBM domain.

This sequence belongs to the ribonuclease III family. In terms of assembly, homodimer. The cofactor is Mg(2+).

The protein resides in the cytoplasm. The enzyme catalyses Endonucleolytic cleavage to 5'-phosphomonoester.. Digests double-stranded RNA. Involved in the processing of primary rRNA transcript to yield the immediate precursors to the large and small rRNAs (23S and 16S). Processes some mRNAs, and tRNAs when they are encoded in the rRNA operon. Processes pre-crRNA and tracrRNA of type II CRISPR loci if present in the organism. This chain is Ribonuclease 3, found in Campylobacter jejuni subsp. doylei (strain ATCC BAA-1458 / RM4099 / 269.97).